The primary structure comprises 395 residues: Ribosomal RNA large subunit methyltransferase I (395 aa).

Residues 2–79 (SSRVTLHPGR…QNESVDNGFF (78 aa)) form the PUA domain.

Belongs to the methyltransferase superfamily. RlmI family.

It localises to the cytoplasm. The catalysed reaction is cytidine(1962) in 23S rRNA + S-adenosyl-L-methionine = 5-methylcytidine(1962) in 23S rRNA + S-adenosyl-L-homocysteine + H(+). Functionally, specifically methylates the cytosine at position 1962 (m5C1962) of 23S rRNA. The sequence is that of Ribosomal RNA large subunit methyltransferase I from Pseudoalteromonas atlantica (strain T6c / ATCC BAA-1087).